A 270-amino-acid polypeptide reads, in one-letter code: UPF0162 protein PA3419 (270 aa).

The protein belongs to the UPF0162 family.

This chain is UPF0162 protein PA3419, found in Pseudomonas aeruginosa (strain ATCC 15692 / DSM 22644 / CIP 104116 / JCM 14847 / LMG 12228 / 1C / PRS 101 / PAO1).